Consider the following 468-residue polypeptide: Glutamyl-tRNA reductase (468 aa).

Substrate contacts are provided by residues 49–52, S109, 114–116, and Q120; these read TCNR and EQQ. C50 (nucleophile) is an active-site residue. 189 to 194 contributes to the NADP(+) binding site; it reads GAGAMG. Residues 443–468 are disordered; it reads VPSGFDAESRRGGGDMQSSPKRSPSN. Positions 458-468 are enriched in polar residues; that stretch reads MQSSPKRSPSN.

This sequence belongs to the glutamyl-tRNA reductase family. Homodimer.

It carries out the reaction (S)-4-amino-5-oxopentanoate + tRNA(Glu) + NADP(+) = L-glutamyl-tRNA(Glu) + NADPH + H(+). It functions in the pathway porphyrin-containing compound metabolism; protoporphyrin-IX biosynthesis; 5-aminolevulinate from L-glutamyl-tRNA(Glu): step 1/2. In terms of biological role, catalyzes the NADPH-dependent reduction of glutamyl-tRNA(Glu) to glutamate 1-semialdehyde (GSA). This Mycobacterium tuberculosis (strain ATCC 25177 / H37Ra) protein is Glutamyl-tRNA reductase.